A 690-amino-acid chain; its full sequence is Cyclic nucleotide-gated channel alpha-1 (690 aa).

Residues 1 to 163 (MKKVIINTWH…VVIDPSGNTY (163 aa)) lie on the Cytoplasmic side of the membrane. 2 disordered regions span residues 33 to 76 (GACS…PSQR) and 88 to 151 (NVNN…EEKK). Acidic residues predominate over residues 40–54 (GDDDDSASMFEESET). Polar residues predominate over residues 64-76 (RSNTHGSGQPSQR). Residues 111 to 151 (SKPDDKNENKKDPEKKKKKEKDKDKKKKEEKGKDKKEEEKK) are compositionally biased toward basic and acidic residues. The helical transmembrane segment at 164–185 (YNWLFCITLPVMYNWTMIIARA) threads the bilayer. The Extracellular portion of the chain corresponds to 186–195 (CFDELQSDYL). A helical membrane pass occupies residues 196 to 215 (EYWLAFDYLSDVVYLLDMFV). Residues 216 to 241 (RTRTGYLEQGLLVKEERKLIDKYKST) lie on the Cytoplasmic side of the membrane. A helical transmembrane segment spans residues 242–251 (FQFKLDVLSV). Residues 252-264 (IPTDLLYIKFGWN) lie on the Extracellular side of the membrane. Residues 265-283 (YPEIRLNRLLRISRMFEFF) traverse the membrane as a helical segment. The Cytoplasmic segment spans residues 284 to 291 (QRTETRTN). The helical transmembrane segment at 292-315 (YPNIFRISNLVMYIIIIIHWNACV) threads the bilayer. Residues 293-402 (PNIFRISNLV…NIGSMISNMN (110 aa)) form an ion conduction pathway region. The Extracellular portion of the chain corresponds to 316–342 (YFSISKAIGFGNDTWVYPDVNDPDFGR). Asparagine 327 carries N-linked (GlcNAc...) asparagine glycosylation. 2 helical membrane-spanning segments follow: residues 343 to 373 (LARKYVYSLYWSTLTLTTIGETPPPVRDSEY) and 374 to 399 (FFVVADFLIGVLIFATIVGNIGSMIS). Residues 360-363 (TIGE) form a selectivity filter region. The Cytoplasmic segment spans residues 400 to 690 (NMNAARAEFQ…ESGPTDSTQD (291 aa)). The C-linker stretch occupies residues 403–479 (AARAEFQARI…DTLKKVRIFA (77 aa)). The interval 482–603 (EAGLLVELVL…EEKGKQILMK (122 aa)) is cyclic nucleotide-binding domain (CNBD). 3',5'-cyclic GMP contacts are provided by glycine 543, serine 546, arginine 559, and threonine 560. Arginine 559 and threonine 560 together coordinate 3',5'-cyclic AMP. A coiled-coil region spans residues 621–664 (LEEKVTRMESSVDLLQTRFARILAEYESMQQKLKQRLTKVEKFL).

Belongs to the cyclic nucleotide-gated cation channel (TC 1.A.1.5) family. CNGA1 subfamily. In terms of assembly, forms a heterotetramer with CNGB1 in a 3:1 ratio. May also form cyclic nucleotide-activated homotetrameric channels, that are efficiently activated by saturating cGMP, but poorly activated by saturating cAMP compared to the heterotetramer with CNGB1. The channel binds Ca(2+)-bound CALM1 via CaM1 and CaM2 regions of the CNGB1 subunit; this interaction modulates the affinity of the channel for cNMPs in response to intracellular Ca(2+) levels. In terms of tissue distribution, expressed in the retina, in rod cells (at protein level).

It is found in the cell membrane. It catalyses the reaction Ca(2+)(in) = Ca(2+)(out). It carries out the reaction Na(+)(in) = Na(+)(out). The enzyme catalyses K(+)(in) = K(+)(out). The catalysed reaction is NH4(+)(in) = NH4(+)(out). It catalyses the reaction Rb(+)(in) = Rb(+)(out). It carries out the reaction Li(+)(in) = Li(+)(out). The enzyme catalyses Cs(+)(in) = Cs(+)(out). Functionally, pore-forming subunit of the rod cyclic nucleotide-gated channel. Mediates rod photoresponses at dim light converting transient changes in intracellular cGMP levels into electrical signals. In the dark, cGMP levels are high and keep the channel open enabling a steady inward current carried by Na(+) and Ca(2+) ions that leads to membrane depolarization and neurotransmitter release from synaptic terminals. Upon photon absorption cGMP levels decline leading to channel closure and membrane hyperpolarization that ultimately slows neurotransmitter release and signals the presence of light, the end point of the phototransduction cascade. Conducts cGMP- and cAMP-gated ion currents, with permeability for monovalent and divalent cations. The selectivity for Ca(2+) over Na(+) increases with cGMP concentrations, whereas the selectivity among monovalent ions is independent of the cGMP levels. The protein is Cyclic nucleotide-gated channel alpha-1 of Bos taurus (Bovine).